The primary structure comprises 86 residues: Toxin CngtIV (86 aa).

An N-terminal signal peptide occupies residues 1–19 (MNSLLIITACLVLIGTVWA). Residues 20–84 (KDGYLVDVKG…TWPLPNKRCG (65 aa)) form the LCN-type CS-alpha/beta domain. Cystine bridges form between C30–C83, C34–C59, C43–C64, and C47–C66.

The protein belongs to the long (4 C-C) scorpion toxin superfamily. Sodium channel inhibitor family. Beta subfamily. As to expression, expressed by the venom gland.

It localises to the secreted. Functionally, beta toxins bind voltage-independently at site-4 of sodium channels (Nav) and shift the voltage of activation toward more negative potentials thereby affecting sodium channel activation and promoting spontaneous and repetitive firing. In Centruroides noxius (Mexican scorpion), this protein is Toxin CngtIV.